We begin with the raw amino-acid sequence, 691 residues long: MPRQFPLNKTRNIGIMAHIDAGKTTTTERILFYTGRVHKIGEVHDGAATMDWMVQEQERGITITSAATTCQWRGHRINIIDTPGHVDFTVEVERSLRVLDGAVAVFCSVGGVEPQSETVWRQADKYGVPRIAYINKMDRIGADFFRGVSMIRERLGANPVPIQIPIGAEDQFKGIVDLITMKAIIYVDDLGKTSDVTEIPEDLADIAAEYREKLLEAVAESDEELMMKYLEGEELTEEEIRNGIRKSTLAVKMIPVLCGSSFKNKGVQPLLDAVVEFLPAPVDIPAVKGVNPDSGEEDVREVSDEEPFSTLAFKIMADPYVGKLAFFRVYSGKLSSGSYVYNSTKGKKERIGRILQMHANHREEIAEVYTGDIAAAVGLKDTTTGDTLCDEKHPIILESMQFPEPVIHVAIEPKTKADQDKMAIALQRLSEEDPTFRMSTDHETGQTIISGMGELHLEIIVDRMMREFKVEANVGRPQVAYKETIRSKAKAEGKFVRQSGGRGQYGHAVIEIEPLEPGAGYEFVNKIVGGVIPREYIPAIDNGIREAAETGVLAGYPTVDFRVTLVFGSYHDVDSSEMAFKIAGSMAFKEGAAKANPVILEPVMKVEVTVPEEYMGDVIGDINSRRGRIEGMESRGSTQVVRGYVPLSEMFGYATDLRSRTQGRGQYVMMYSHNEEVPRNIAEGIIAKRKG.

One can recognise a tr-type G domain in the interval 8–282; that stretch reads NKTRNIGIMA…AVVEFLPAPV (275 aa). GTP-binding positions include 17–24, 81–85, and 135–138; these read AHIDAGKT, DTPGH, and NKMD.

This sequence belongs to the TRAFAC class translation factor GTPase superfamily. Classic translation factor GTPase family. EF-G/EF-2 subfamily.

Its subcellular location is the cytoplasm. In terms of biological role, catalyzes the GTP-dependent ribosomal translocation step during translation elongation. During this step, the ribosome changes from the pre-translocational (PRE) to the post-translocational (POST) state as the newly formed A-site-bound peptidyl-tRNA and P-site-bound deacylated tRNA move to the P and E sites, respectively. Catalyzes the coordinated movement of the two tRNA molecules, the mRNA and conformational changes in the ribosome. The polypeptide is Elongation factor G (Heliobacterium modesticaldum (strain ATCC 51547 / Ice1)).